A 249-amino-acid chain; its full sequence is Probable septum site-determining protein MinC (249 aa).

The segment at 116–149 is disordered; the sequence is AAVSPPPPPPPPPARAEPAAPVARPAPGRMQRNA. Positions 119–130 are enriched in pro residues; it reads SPPPPPPPPPAR. Residues 131-142 show a composition bias toward low complexity; sequence AEPAAPVARPAP.

It belongs to the MinC family. In terms of assembly, interacts with MinD and FtsZ.

Its function is as follows. Cell division inhibitor that blocks the formation of polar Z ring septums. Rapidly oscillates between the poles of the cell to destabilize FtsZ filaments that have formed before they mature into polar Z rings. Prevents FtsZ polymerization. The protein is Probable septum site-determining protein MinC of Xanthomonas campestris pv. campestris (strain B100).